The sequence spans 879 residues: Putative ankyrin repeat protein L88 (879 aa).

ANK repeat units lie at residues 22–62 (KGFT…QKNK), 63–96 (KGYT…KTNI), 100–133 (EGIT…DINA), 137–170 (NGYT…NIDD), 174–207 (NGLT…DINA), 211–241 (NGRT…DIEA), 245–278 (KGLT…NIEA), 282–313 (KLRT…NIET), 317–347 (RNNT…NINH), 351–384 (EGCN…NINN), 387–420 (SERT…DPNI), 424–463 (NGNT…NPNF), 470–499 (NSLT…DINS), 506–542 (SALL…DVNI), 546–578 (NGNT…NPNT), 674–704 (SGIT…DPNI), and 708–738 (KGET…NPYI).

This Acanthamoeba polyphaga mimivirus (APMV) protein is Putative ankyrin repeat protein L88.